The sequence spans 302 residues: Sulfate adenylyltransferase subunit 2 (302 aa).

Residues 280–302 form a disordered region; sequence RQGRLIDSDQSASMEQKKRQGYF.

Belongs to the PAPS reductase family. CysD subfamily. Heterodimer composed of CysD, the smaller subunit, and CysN.

It carries out the reaction sulfate + ATP + H(+) = adenosine 5'-phosphosulfate + diphosphate. It participates in sulfur metabolism; hydrogen sulfide biosynthesis; sulfite from sulfate: step 1/3. In terms of biological role, with CysN forms the ATP sulfurylase (ATPS) that catalyzes the adenylation of sulfate producing adenosine 5'-phosphosulfate (APS) and diphosphate, the first enzymatic step in sulfur assimilation pathway. APS synthesis involves the formation of a high-energy phosphoric-sulfuric acid anhydride bond driven by GTP hydrolysis by CysN coupled to ATP hydrolysis by CysD. The protein is Sulfate adenylyltransferase subunit 2 of Shewanella baltica (strain OS223).